The primary structure comprises 190 residues: Transcription termination/antitermination protein NusG (190 aa).

Residues Gly-141 to Gln-165 form the KOW domain.

Belongs to the NusG family.

In terms of biological role, participates in transcription elongation, termination and antitermination. This chain is Transcription termination/antitermination protein NusG, found in Deinococcus radiodurans (strain ATCC 13939 / DSM 20539 / JCM 16871 / CCUG 27074 / LMG 4051 / NBRC 15346 / NCIMB 9279 / VKM B-1422 / R1).